The primary structure comprises 948 residues: MDRSSKRRQVKPLAASLLEALDYDSSDDSDFKVGDASDSEGSGNGSEDASKDSGEGSCSDSEENILEEELNEDIKVKEEQLKNSAEEEVLSSEKQLIKMEKKEEEENGERPRKKKEKEKEKEKEKEKEKEREKEKEKATVSENVAASAAATTPATSPPAVNTSPSVPTTTTATEEQVSEPKKWNLRRNRPLLDFVSMEELNDMDDYDSEDDNDWRPTVVKRKGRSASQKEGSDGDNEDDEDEGSGSDEDENDEGNDEDHSSPASEGGCKKKKSKVLSRNSADDEELTNDSLTLSQSKSNEDSLILEKSQNWSSQKMDHILICCVCLGDNSEDADEIIQCDNCGITVHEGCYGVDGESDSIMSSASENSTEPWFCDACKCGVSPSCELCPNQDGIFKETDAGRWVHIVCALYVPGVAFGDIDKLRPVTLTEMNYSKYGAKECSFCEDPRFARTGVCISCDAGMCRAYFHVTCAQKEGLLSEAAAEEDIADPFFAYCKQHADRLDRKWKRKNYLALQSYCKMSLQEREKQLSPEAQARINARLQQYRAKAELARSTRPQAWVPREKLPRPLTSSASAIRKLMRKAELMGISTDIFPVDNSDTSSSVDGRRKHKQPALTADFVNYYFERNMRMIQIQENMAEQKNIKDKLENEQEKLHVEYNKLCESLEELQNLNGKLRSEGQGIWALLGRITGQKLNIPAILRAPKERKPSKKEGGTQKTSTLPAVLYSCGICKKNHDQHLLLLCDTCKLHYHLGCLDPPLTRMPRKTKNSYWQCSECDQAGSSDMEADMAMETLPDGTKRSRRQIKEPVKFVPQDVPPEPKKIPIRNTRTRGRKRSFVPEEEKHEERVPRERRQRQSVLQKKPKAEDLRTECATCKGTGDNENLVRCDECRLCYHFGCLDPPLKKSPKQTGYGWICQECDSSSSKEDENEAERKNISQELNMEQKNPKK.

The interval Asp-22 to Ser-302 is disordered. A phosphoserine mark is found at Ser-26 and Ser-29. Residues Ala-36–Glu-47 show a composition bias toward low complexity. Positions Asp-60–Asn-71 are enriched in acidic residues. The segment covering Glu-72–Ala-85 has biased composition (basic and acidic residues). A phosphoserine mark is found at Ser-84 and Ser-91. Composition is skewed to basic and acidic residues over residues Gln-95 to Arg-110 and Lys-117 to Thr-139. Over residues Val-140–Glu-174 the composition is skewed to low complexity. Ser-196 bears the Phosphoserine mark. Composition is skewed to acidic residues over residues Glu-199–Asn-212 and Asp-233–Asp-256. A Phosphotyrosine modification is found at Tyr-206. Ser-208 is subject to Phosphoserine. At Thr-287 the chain carries Phosphothreonine. The segment covering Asn-288 to Lys-297 has biased composition (polar residues). 5 positions are modified to phosphoserine: Ser-290, Ser-294, Ser-298, Ser-302, and Ser-308. The PHD-type 1 zinc finger occupies Ile-319–Gly-380. Positions 322, 325, 339, 342, 347, and 350 each coordinate Zn(2+). Ser-359 is modified (phosphoserine). Zn(2+) contacts are provided by Cys-374, Cys-377, Cys-385, Cys-388, His-405, Cys-408, Cys-441, Cys-444, Cys-458, Cys-463, His-468, Cys-471, Cys-495, and His-498. The C2HC pre-PHD-type zinc finger occupies Ser-382 to Val-415. The PHD-type 2 zinc finger occupies Lys-439–Ala-499. Phosphoserine is present on Ser-530. A coiled-coil region spans residues Met-630–Glu-678. Residue Glu-648 forms a Glycyl lysine isopeptide (Lys-Gly) (interchain with G-Cter in SUMO2) linkage. Gln-651 carries the post-translational modification Phosphoserine. A PHD-type 3 zinc finger spans residues Leu-725–Ala-779. Positions 728, 731, 743, 746, 751, 754, 773, and 776 each coordinate Zn(2+). 3 positions are modified to phosphoserine: Ser-781, Ser-782, and Ser-835. Residues Val-811–Pro-862 are disordered. The span at Phe-836–Glu-850 shows a compositional bias: basic and acidic residues. Residues Arg-868–Ser-921 form a PHD-type 4 zinc finger. Zn(2+)-binding residues include Cys-871, Cys-874, Cys-886, Cys-889, His-894, Cys-897, Cys-915, and Cys-918. The segment at Ser-920–Lys-948 is disordered. A compositionally biased stretch (basic and acidic residues) spans Ser-922–Ile-935. The span at Ser-936–Lys-948 shows a compositional bias: polar residues.

The protein localises to the nucleus. It is found in the chromosome. The protein resides in the cytoplasm. Functionally, histone-binding protein. Binds preferentially to unmodified histone H3 but can also bind to a lesser extent to histone H3 trimethylated at 'Lys-9' (H3K9me3) as well as to histone H3 monomethylated at 'Lys-27' (H3K27ac) and trimethylated at 'Lys-27' (H3K27me3). Represses PDGFRA expression, thus playing a role in regulation of mesenchymal cell proliferation. Suppresses the expression of CDKN1A/p21 by reducing the level of trimethylation of histone H3 'Lys-4', leading to enhanced proliferation of germinal center B cells. This is PHD finger protein 14 (PHF14) from Homo sapiens (Human).